The sequence spans 577 residues: (E)-beta-farnesene synthase (577 aa).

Asp327, Asp331, Asp474, Ser478, and Glu482 together coordinate Mg(2+). Residues 327-331 carry the DDXXD motif motif; that stretch reads DDTFD.

The protein belongs to the terpene synthase family. Mg(2+) is required as a cofactor. Requires Co(2+) as cofactor. The cofactor is Mn(2+). Expressed in flowers.

It localises to the cytoplasm. It catalyses the reaction (2E,6E)-farnesyl diphosphate = (E)-beta-farnesene + diphosphate. The protein operates within secondary metabolite biosynthesis; terpenoid biosynthesis. Strongly inhibited by manganese at concentration higher than 20 uM. Functionally, sesquiterpene cyclase catalyzing the production of beta-farnesene from farnesyl diphosphate. Unable to use geranyl diphosphate as substrate. This is (E)-beta-farnesene synthase (CASC125) from Artemisia annua (Sweet wormwood).